A 297-amino-acid polypeptide reads, in one-letter code: Bifunctional protein FolD 2 (297 aa).

Residues 177–179 (GKS), isoleucine 202, and isoleucine 243 contribute to the NADP(+) site.

Belongs to the tetrahydrofolate dehydrogenase/cyclohydrolase family. In terms of assembly, homodimer.

The enzyme catalyses (6R)-5,10-methylene-5,6,7,8-tetrahydrofolate + NADP(+) = (6R)-5,10-methenyltetrahydrofolate + NADPH. It carries out the reaction (6R)-5,10-methenyltetrahydrofolate + H2O = (6R)-10-formyltetrahydrofolate + H(+). It participates in one-carbon metabolism; tetrahydrofolate interconversion. Functionally, catalyzes the oxidation of 5,10-methylenetetrahydrofolate to 5,10-methenyltetrahydrofolate and then the hydrolysis of 5,10-methenyltetrahydrofolate to 10-formyltetrahydrofolate. This is Bifunctional protein FolD 2 from Rhizorhabdus wittichii (strain DSM 6014 / CCUG 31198 / JCM 15750 / NBRC 105917 / EY 4224 / RW1) (Sphingomonas wittichii).